Consider the following 234-residue polypeptide: MAHTTPRSHPPPHSLLQNLTTQSLLLSHLFTLIASPPNPNTSTQTQLNQVYSALQLSTLDLSGLVKEVGHHQEAYRRLVEKKNEVAGLEMRVRGLVKRLEEGRKELEGMIDQGERSLEDIQKSEREPVPAKTLMAHAQSLSKHSSAPVSSLLAPVDKAQYAPWPTEMSMRMGLLFQLEGSMSGMGERGVVGEEQKAPQKVEERREHVEHEESGRRYDPNAVFQLDLNSDESDED.

Positions 71–124 (HQEAYRRLVEKKNEVAGLEMRVRGLVKRLEEGRKELEGMIDQGERSLEDIQKSE) form a coiled coil. The interval 188 to 234 (GVVGEEQKAPQKVEERREHVEHEESGRRYDPNAVFQLDLNSDESDED) is disordered. A compositionally biased stretch (basic and acidic residues) spans 189–217 (VVGEEQKAPQKVEERREHVEHEESGRRYD).

The protein belongs to the Mediator complex subunit 4 family. Component of the Mediator complex.

It is found in the nucleus. Its function is as follows. Component of the Mediator complex, a coactivator involved in the regulated transcription of nearly all RNA polymerase II-dependent genes. Mediator functions as a bridge to convey information from gene-specific regulatory proteins to the basal RNA polymerase II transcription machinery. Mediator is recruited to promoters by direct interactions with regulatory proteins and serves as a scaffold for the assembly of a functional preinitiation complex with RNA polymerase II and the general transcription factors. This Cryptococcus neoformans var. neoformans serotype D (strain B-3501A) (Filobasidiella neoformans) protein is Mediator of RNA polymerase II transcription subunit 4 (MED4).